A 238-amino-acid chain; its full sequence is MIAFIVLLSLAAVLQQSSGTVDFASESSNKKDYQREIVDKHNALRRSVKPTARNMLQMKWNSHAAQNAKRSADRCTFAHSPEHTRTVGKFRCGENIFMSSQPFAWSGVVQAWYDEIKNFVYGIGAKPPGSVIGHYTQIVWYKSHLLGCASAKCSSTKYLYVCQYCPAGNIRSSIATPYKSGPSCGDCPSACVNGLCTNPCEYEDAYTNCNDLVKERKCQTEWIKSQCPATCFCHNKII.

A signal peptide spans 1-19 (MIAFIVLLSLAAVLQQSSG). The 127-residue stretch at 38–164 (VDKHNALRRS…STKYLYVCQY (127 aa)) folds into the SCP domain. 8 cysteine pairs are disulfide-bonded: Cys-75/Cys-153, Cys-92/Cys-165, Cys-148/Cys-162, Cys-184/Cys-191, Cys-187/Cys-196, Cys-200/Cys-233, Cys-209/Cys-227, and Cys-218/Cys-231. In terms of domain architecture, ShKT spans 200 to 233 (CEYEDAYTNCNDLVKERKCQTEWIKSQCPATCFC).

It belongs to the CRISP family. In terms of tissue distribution, expressed by the venom gland.

The protein localises to the secreted. In terms of biological role, blocks contraction of smooth muscle elicited by high potassium-induced depolarization, but does not block caffeine-stimulated contraction. May target voltage-gated calcium channels (Cav) on smooth muscle. The sequence is that of Cysteine-rich venom protein 2 from Hydrophis hardwickii (Hardwick's spine-bellied seasnake).